We begin with the raw amino-acid sequence, 351 residues long: D-alanine--D-alanine ligase (351 aa).

The 209-residue stretch at 135 to 343 (NQIFLQSGQK…MEEVFSDLIE (209 aa)) folds into the ATP-grasp domain. 167–222 (LETLGFPQFLKPVEGGSSVSVYKITNREQLKEKLALIFESDSKVMSQSFLTGIEVS) is an ATP binding site. Mg(2+)-binding residues include Asp298, Glu310, and Asn312.

This sequence belongs to the D-alanine--D-alanine ligase family. Mg(2+) is required as a cofactor. Mn(2+) serves as cofactor.

The protein localises to the cytoplasm. It catalyses the reaction 2 D-alanine + ATP = D-alanyl-D-alanine + ADP + phosphate + H(+). Its pathway is cell wall biogenesis; peptidoglycan biosynthesis. Cell wall formation. The protein is D-alanine--D-alanine ligase of Leptospira interrogans serogroup Icterohaemorrhagiae serovar copenhageni (strain Fiocruz L1-130).